Consider the following 122-residue polypeptide: Venom protein 7.1 (122 aa).

Residues 1 to 19 form the signal peptide; it reads MRFSIISASLVLIFANVKA.

Contains 3 disulfide bonds. In terms of tissue distribution, expressed by the venom gland.

It localises to the secreted. The sequence is that of Venom protein 7.1 from Lychas mucronatus (Chinese swimming scorpion).